The primary structure comprises 432 residues: Beta-fructosidase (432 aa).

Substrate-binding positions include 14–17, Gln33, Trp41, 74–75, Tyr92, 137–138, 188–190, Thr208, and Trp260; these read WMND, FS, RD, and EIE. Asp17 is an active-site residue.

This sequence belongs to the glycosyl hydrolase 32 family.

The enzyme catalyses Hydrolysis of terminal non-reducing beta-D-fructofuranoside residues in beta-D-fructofuranosides.. Functionally, hydrolysis of sucrose, raffinose, inulin and levan. Specific for the fructose moiety and the beta-anomeric configuration of the glycosidic linkages of its substrates. The enzyme released fructose from sucrose and raffinose, and the fructose polymer inulin is hydrolyzed quantitatively in an exo-type fashion. The chain is Beta-fructosidase (bfrA) from Thermotoga maritima (strain ATCC 43589 / DSM 3109 / JCM 10099 / NBRC 100826 / MSB8).